Reading from the N-terminus, the 105-residue chain is DRDAQTLTDERNDQGDGNFRYEFETSNGIYTQKTGTPGSEGQSNYQGSFRFPLEDGTIAEVTYIADENGFQPSSDLLPVGPPAPPHVQRLLEIAEDQRRQGITFD.

Residues 1-21 form a disordered region; sequence DRDAQTLTDERNDQGDGNFRY. Positions 16 to 81 constitute a Chitin-binding type R&amp;R domain; sequence DGNFRYEFET…PSSDLLPVGP (66 aa).

Arthrodial membrane.

The protein is Cuticle protein AMP4 of Homarus americanus (American lobster).